A 490-amino-acid chain; its full sequence is Solute carrier family 2, facilitated glucose transporter member 1 (490 aa).

Topologically, residues 1 to 10 are cytoplasmic; the sequence is MESGSKMTAR. The chain crosses the membrane as a helical span at residues 11–32; sequence LMLAVGGAVLGSLQFGYNTGVI. The Extracellular portion of the chain corresponds to 33–65; it reads NRPQKVIEDFYNHTWLYRYEEPISPATLTTLWS. The N-linked (GlcNAc...) asparagine glycan is linked to N44. Residues 66–86 form a helical membrane-spanning segment; the sequence is LSVAIFSVGGMIGSFSVGLFV. Over 87-89 the chain is Cytoplasmic; the sequence is NRF. The helical transmembrane segment at 90 to 111 threads the bilayer; that stretch reads GRRNSMLMSNILAFLAAVLMGF. Residues 112–119 lie on the Extracellular side of the membrane; the sequence is SKMALSFE. A helical transmembrane segment spans residues 120 to 143; the sequence is MLILGRFIIGLYSGLTTGFVPMYV. The Cytoplasmic segment spans residues 144-154; the sequence is GEVSPTALRGA. Residues 155 to 175 traverse the membrane as a helical segment; that stretch reads LGTFHQLGIVLGILIAQVFGL. A D-glucose-binding site is contributed by Q160. At 176–184 the chain is on the extracellular side; that stretch reads DLIMGNDSL. Residues 185–205 form a helical membrane-spanning segment; it reads WPLLLGFIFVPALLQCIILPF. Over 206–270 the chain is Cytoplasmic; sequence APESPRFLLI…LFRSPMYRQP (65 aa). Residues 271-292 traverse the membrane as a helical segment; the sequence is ILIAIVLQLSQQLSGINAVFYY. Residues 281–282 and N287 each bind D-glucose; that span reads QQ. Residues 293 to 305 are Extracellular-facing; that stretch reads STSIFEKSGVEQP. The helical transmembrane segment at 306-327 threads the bilayer; sequence VYATIGSGVVNTAFTVVSLFVV. N316 is a binding site for D-glucose. Residues 328-333 lie on the Cytoplasmic side of the membrane; that stretch reads ERAGRR. Residues 334–354 traverse the membrane as a helical segment; sequence TLHLIGLAGMAGCAILMTIAL. The Extracellular segment spans residues 355 to 364; the sequence is TLLDQMPWMS. The helical transmembrane segment at 365–387 threads the bilayer; it reads YLSIVAIFGFVAFFEIGPGPIPW. Positions 379 and 387 each coordinate D-glucose. At 388–400 the chain is on the cytoplasmic side; that stretch reads FIVAELFSQGPRP. Residues 401 to 421 traverse the membrane as a helical segment; sequence AAFAVAGLSNWTSNFIVGMGF. The Extracellular segment spans residues 422–428; the sequence is QYIAQLC. The helical transmembrane segment at 429 to 449 threads the bilayer; sequence GSYVFIIFTVLLVLFFIFTYF. Over 450-490 the chain is Cytoplasmic; the sequence is KVPETKGRTFDEIAYRFRQGGASQSDKTPDEFHSLGADSQV. The disordered stretch occupies residues 470–490; sequence GASQSDKTPDEFHSLGADSQV.

This sequence belongs to the major facilitator superfamily. Sugar transporter (TC 2.A.1.1) family. Glucose transporter subfamily. Interacts with isoform 1 of BSG. Retinal cones (at protein level).

Its subcellular location is the cell membrane. The protein localises to the photoreceptor inner segment. It catalyses the reaction D-glucose(out) = D-glucose(in). Its function is as follows. Facilitative glucose transporter, which is responsible for constitutive or basal glucose uptake. Has a very broad substrate specificity; can transport a wide range of aldoses including both pentoses and hexoses. Most important energy carrier of the brain: present at the blood-brain barrier and assures the energy-independent, facilitative transport of glucose into the brain. In association with BSG and NXNL1, promotes retinal cone survival by increasing glucose uptake into photoreceptors. Required for mesendoderm differentiation. This is Solute carrier family 2, facilitated glucose transporter member 1 from Gallus gallus (Chicken).